Reading from the N-terminus, the 96-residue chain is Small ribosomal subunit protein bS6 (96 aa).

Belongs to the bacterial ribosomal protein bS6 family.

Functionally, binds together with bS18 to 16S ribosomal RNA. The chain is Small ribosomal subunit protein bS6 from Salinispora tropica (strain ATCC BAA-916 / DSM 44818 / JCM 13857 / NBRC 105044 / CNB-440).